A 326-amino-acid polypeptide reads, in one-letter code: Endochitinase (326 aa).

Residues 1–25 (MVYCTASLPLLLLLLVGLLAGEAFA) form the signal peptide. In terms of domain architecture, Chitin-binding type-1 spans 26–66 (EQCGRQAGGALCPGGLCCSQFGWCGSTSDYCGPTCQSQCGG). Disulfide bonds link cysteine 28–cysteine 43, cysteine 37–cysteine 49, cysteine 42–cysteine 56, cysteine 60–cysteine 64, cysteine 96–cysteine 158, cysteine 170–cysteine 178, and cysteine 277–cysteine 309. Glutamate 140 serves as the catalytic Proton donor.

The protein belongs to the glycosyl hydrolase 19 family. Chitinase class I subfamily. As to expression, expressed in the pulp of the fruit (at protein level). Expressed in mesocarp (at protein level).

The enzyme catalyses Random endo-hydrolysis of N-acetyl-beta-D-glucosaminide (1-&gt;4)-beta-linkages in chitin and chitodextrins.. Defense against chitin-containing fungal pathogens. Has in vitro antifungal activity against F.oxysporum inhibiting its growth and the branching of its hyphae. Has endochitinase activity, but no exochitinase or lysozyme activities. This chain is Endochitinase, found in Persea americana (Avocado).